A 209-amino-acid chain; its full sequence is MARYTGPVCRLCRREGMKLFLKGTKCFTDKCAIEKRNFAPGQHGRDRKAKIVGYGLQLREKQKAKRIYFTLEGQFREYYEKASRAPGVTGELLIQQLECRLDNIAFRLGFATSRRQARQIVRHGHVEVNGRKVNIPSFQVKVGDEIKIRPNSSKLVVVEMGRDFASGQPAPAWLQVDHANLSGKVVSLPKREDVNLPVNEQLIVELYSK.

Residues cysteine 99–glycine 161 enclose the S4 RNA-binding domain.

It belongs to the universal ribosomal protein uS4 family. In terms of assembly, part of the 30S ribosomal subunit. Contacts protein S5. The interaction surface between S4 and S5 is involved in control of translational fidelity.

Its function is as follows. One of the primary rRNA binding proteins, it binds directly to 16S rRNA where it nucleates assembly of the body of the 30S subunit. Functionally, with S5 and S12 plays an important role in translational accuracy. This is Small ribosomal subunit protein uS4 from Acidobacterium capsulatum (strain ATCC 51196 / DSM 11244 / BCRC 80197 / JCM 7670 / NBRC 15755 / NCIMB 13165 / 161).